The primary structure comprises 261 residues: Expansin-B2 (261 aa).

The N-terminal stretch at 1–24 (MAGASAKVVAMLLSVLATYGFAAG) is a signal peptide. The region spanning 51–157 (GGACGFKNTN…RRVPCYHRGL (107 aa)) is the Expansin-like EG45 domain. Intrachain disulfides connect Cys54/Cys82, Cys85/Cys152, and Cys90/Cys96. One can recognise an Expansin-like CBD domain in the interval 170-256 (VYLAVLVEFA…NWRANTNYGS (87 aa)).

Belongs to the expansin family. Expansin B subfamily. In terms of tissue distribution, expressed in roots.

Its subcellular location is the secreted. It is found in the cell wall. The protein localises to the membrane. Its function is as follows. May cause loosening and extension of plant cell walls by disrupting non-covalent bonding between cellulose microfibrils and matrix glucans. No enzymatic activity has been found. May be required for rapid internodal elongation in deepwater rice during submergence. The polypeptide is Expansin-B2 (EXPB2) (Oryza sativa subsp. japonica (Rice)).